The sequence spans 200 residues: Cation channel sperm-associated auxiliary subunit zeta (200 aa).

Residues 1–29 (MEEKPSKVSLKSSDRQGSDEESVHSDTRD) are compositionally biased toward basic and acidic residues. Disordered regions lie at residues 1 to 31 (MEEK…RDLW) and 58 to 78 (NISK…EGYK).

In terms of assembly, component of the CatSper complex or CatSpermasome composed of the core pore-forming members CATSPER1, CATSPER2, CATSPER3 and CATSPER4 as well as auxiliary members CATSPERB, CATSPERG, CATSPERD, CATSPERE, CATSPERZ, C2CD6/CATSPERT, TMEM249, TMEM262 and EFCAB9. HSPA1 may be an additional auxiliary complex member. The core complex members CATSPER1, CATSPER2, CATSPER3 and CATSPER4 form a heterotetrameric channel. The auxiliary CATSPERB, CATSPERG, CATSPERD and CATSPERE subunits form a pavilion-like structure over the pore which stabilizes the complex through interactions with CATSPER4, CATSPER3, CATSPER1 and CATSPER2 respectively. TMEM262/CATSPERH interacts with CATSPERB, further stabilizing the complex. C2CD6/CATSPERT interacts at least with CATSPERD and is required for targeting the CatSper complex in the flagellar membrane. Interacts with EFCAB9; the interaction is direct, Ca(2+)-dependent and connects EFCAB9 with the CatSper complex. Dissociates from EFCAB9 at elevated pH.

Its subcellular location is the cell projection. It localises to the cilium. The protein resides in the flagellum membrane. Its function is as follows. Auxiliary component of the CatSper complex, a complex involved in sperm cell hyperactivation. Sperm cell hyperactivation is needed for sperm motility which is essential late in the preparation of sperm for fertilization. Required for a distribution of the CatSper complex in linear quadrilateral nanodomains along the flagellum, maximizing fertilization inside the mammalian female reproductive tract. Together with EFCAB9, associates with the CatSper channel pore and is required for the two-row structure of each single CatSper channel. This is Cation channel sperm-associated auxiliary subunit zeta from Homo sapiens (Human).